Consider the following 447-residue polypeptide: Phosphoglucosamine mutase (447 aa).

Ser-100 (phosphoserine intermediate) is an active-site residue. The Mg(2+) site is built by Ser-100, Asp-240, Asp-242, and Asp-244. Ser-100 carries the post-translational modification Phosphoserine.

The protein belongs to the phosphohexose mutase family. Mg(2+) is required as a cofactor. Post-translationally, activated by phosphorylation.

It carries out the reaction alpha-D-glucosamine 1-phosphate = D-glucosamine 6-phosphate. Functionally, catalyzes the conversion of glucosamine-6-phosphate to glucosamine-1-phosphate. The chain is Phosphoglucosamine mutase from Anoxybacillus flavithermus (strain DSM 21510 / WK1).